The primary structure comprises 422 residues: Glutamate-1-semialdehyde 2,1-aminomutase (422 aa).

An N6-(pyridoxal phosphate)lysine modification is found at K258.

The protein belongs to the class-III pyridoxal-phosphate-dependent aminotransferase family. HemL subfamily. Homodimer. Pyridoxal 5'-phosphate serves as cofactor.

The protein localises to the cytoplasm. It carries out the reaction (S)-4-amino-5-oxopentanoate = 5-aminolevulinate. The protein operates within porphyrin-containing compound metabolism; protoporphyrin-IX biosynthesis; 5-aminolevulinate from L-glutamyl-tRNA(Glu): step 2/2. The protein is Glutamate-1-semialdehyde 2,1-aminomutase of Chlamydia trachomatis serovar D (strain ATCC VR-885 / DSM 19411 / UW-3/Cx).